Reading from the N-terminus, the 264-residue chain is Diphthine synthase (264 aa).

Residues Leu10, Asp87, Val90, 115–116, Leu166, Ala209, and His234 each bind S-adenosyl-L-methionine; that span reads SI.

It belongs to the diphthine synthase family. In terms of assembly, homodimer.

The catalysed reaction is 2-[(3S)-amino-3-carboxypropyl]-L-histidyl-[translation elongation factor 2] + 3 S-adenosyl-L-methionine = diphthine-[translation elongation factor 2] + 3 S-adenosyl-L-homocysteine + 3 H(+). The protein operates within protein modification; peptidyl-diphthamide biosynthesis. Functionally, S-adenosyl-L-methionine-dependent methyltransferase that catalyzes the trimethylation of the amino group of the modified target histidine residue in translation elongation factor 2 (EF-2), to form an intermediate called diphthine. The three successive methylation reactions represent the second step of diphthamide biosynthesis. The polypeptide is Diphthine synthase (Thermococcus gammatolerans (strain DSM 15229 / JCM 11827 / EJ3)).